A 483-amino-acid polypeptide reads, in one-letter code: Phloretin 2'-O-glucosyltransferase (483 aa).

H15 acts as the Proton acceptor in catalysis. H15 is a binding site for an anthocyanidin. D118 serves as the catalytic Charge relay. UDP-alpha-D-glucose-binding residues include T140, A360, Q362, H377, W380, N381, S382, and E385. A400 contacts an anthocyanidin. E401 and Q402 together coordinate UDP-alpha-D-glucose.

The protein belongs to the UDP-glycosyltransferase family.

It carries out the reaction phloretin + UDP-alpha-D-glucose = phlorizin + UDP + H(+). Its function is as follows. Glycosyltransferase that possesses phloretin 2'-O-glycosyltransferase activity. Converts phloretin to phlorizin (phloretin 2'-O-glucoside), a potent antioxidant. Is specific for phloretin and does not possess glycosyltransferase activity toward caffeic acid, catechin, chlorogenic acid, 2-coumaric acid, 3-coumaric acid, 4-coumaric acid, cyanidin, 3,4-dihydroxyhydrocinnamic acid, epicatechin, 3-hydroxybenzoic acid, naringenin, 3,4-dihydroxybenzoic acid, quercetin and rutin. Can glycosylate phloretin in the presence of UDP-glucose, UDP-xylose and UDP-galactose. This Malus domestica (Apple) protein is Phloretin 2'-O-glucosyltransferase.